We begin with the raw amino-acid sequence, 502 residues long: Type-2 serine--tRNA ligase (502 aa).

Ala304 contributes to the L-serine binding site. Cys306 serves as a coordination point for Zn(2+). L-serine is bound at residue Arg336. ATP contacts are provided by residues 336–338 (RYE) and 347–348 (RV). Residues 353-355 (RVE) and Gln400 contribute to the L-serine site. A Zn(2+)-binding site is contributed by Glu355. Glu432 provides a ligand contact to ATP. Residue Asn435 coordinates L-serine. A Zn(2+)-binding site is contributed by Cys461. Residue Arg468 participates in ATP binding.

Belongs to the class-II aminoacyl-tRNA synthetase family. Type-2 seryl-tRNA synthetase subfamily. As to quaternary structure, homodimer. Zn(2+) serves as cofactor.

It localises to the cytoplasm. The enzyme catalyses tRNA(Ser) + L-serine + ATP = L-seryl-tRNA(Ser) + AMP + diphosphate + H(+). It carries out the reaction tRNA(Sec) + L-serine + ATP = L-seryl-tRNA(Sec) + AMP + diphosphate + H(+). It participates in aminoacyl-tRNA biosynthesis; selenocysteinyl-tRNA(Sec) biosynthesis; L-seryl-tRNA(Sec) from L-serine and tRNA(Sec): step 1/1. In terms of biological role, catalyzes the attachment of serine to tRNA(Ser). Is also able to aminoacylate tRNA(Sec) with serine, to form the misacylated tRNA L-seryl-tRNA(Sec), which will be further converted into selenocysteinyl-tRNA(Sec). The protein is Type-2 serine--tRNA ligase of Methanococcoides burtonii (strain DSM 6242 / NBRC 107633 / OCM 468 / ACE-M).